A 154-amino-acid polypeptide reads, in one-letter code: SsrA-binding protein (154 aa).

Belongs to the SmpB family.

It localises to the cytoplasm. Required for rescue of stalled ribosomes mediated by trans-translation. Binds to transfer-messenger RNA (tmRNA), required for stable association of tmRNA with ribosomes. tmRNA and SmpB together mimic tRNA shape, replacing the anticodon stem-loop with SmpB. tmRNA is encoded by the ssrA gene; the 2 termini fold to resemble tRNA(Ala) and it encodes a 'tag peptide', a short internal open reading frame. During trans-translation Ala-aminoacylated tmRNA acts like a tRNA, entering the A-site of stalled ribosomes, displacing the stalled mRNA. The ribosome then switches to translate the ORF on the tmRNA; the nascent peptide is terminated with the 'tag peptide' encoded by the tmRNA and targeted for degradation. The ribosome is freed to recommence translation, which seems to be the essential function of trans-translation. The chain is SsrA-binding protein from Gluconacetobacter diazotrophicus (strain ATCC 49037 / DSM 5601 / CCUG 37298 / CIP 103539 / LMG 7603 / PAl5).